A 468-amino-acid chain; its full sequence is ATP synthase subunit beta (468 aa).

An ATP-binding site is contributed by glycine 148–threonine 155.

Belongs to the ATPase alpha/beta chains family. As to quaternary structure, F-type ATPases have 2 components, CF(1) - the catalytic core - and CF(0) - the membrane proton channel. CF(1) has five subunits: alpha(3), beta(3), gamma(1), delta(1), epsilon(1). CF(0) has three main subunits: a(1), b(2) and c(9-12). The alpha and beta chains form an alternating ring which encloses part of the gamma chain. CF(1) is attached to CF(0) by a central stalk formed by the gamma and epsilon chains, while a peripheral stalk is formed by the delta and b chains.

It is found in the cell inner membrane. The catalysed reaction is ATP + H2O + 4 H(+)(in) = ADP + phosphate + 5 H(+)(out). Functionally, produces ATP from ADP in the presence of a proton gradient across the membrane. The catalytic sites are hosted primarily by the beta subunits. This Xanthomonas axonopodis pv. citri (strain 306) protein is ATP synthase subunit beta.